We begin with the raw amino-acid sequence, 1055 residues long: Error-prone DNA polymerase (1055 aa).

It belongs to the DNA polymerase type-C family. DnaE2 subfamily.

Its subcellular location is the cytoplasm. The enzyme catalyses DNA(n) + a 2'-deoxyribonucleoside 5'-triphosphate = DNA(n+1) + diphosphate. Its function is as follows. DNA polymerase involved in damage-induced mutagenesis and translesion synthesis (TLS). It is not the major replicative DNA polymerase. The chain is Error-prone DNA polymerase from Corynebacterium glutamicum (strain ATCC 13032 / DSM 20300 / JCM 1318 / BCRC 11384 / CCUG 27702 / LMG 3730 / NBRC 12168 / NCIMB 10025 / NRRL B-2784 / 534).